Consider the following 88-residue polypeptide: UPF0335 protein Mnod_5968 (88 aa).

This sequence belongs to the UPF0335 family.

This Methylobacterium nodulans (strain LMG 21967 / CNCM I-2342 / ORS 2060) protein is UPF0335 protein Mnod_5968.